A 230-amino-acid chain; its full sequence is TorCAD operon transcriptional regulatory protein TorR (230 aa).

The Response regulatory domain occupies 4–117 (HIVIVEDEPV…ELVVRVKNLL (114 aa)). Asp-53 carries the 4-aspartylphosphate modification. A DNA-binding region (ompR/PhoB-type) is located at residues 132-227 (DNCYRFAGYC…QHGEGYFLAA (96 aa)).

In terms of assembly, interacts with TorI. TorI binds to the effector domain of TorR. This interaction, which does not interfere with TorR DNA binding activity, probably prevents the recruitment of RNA polymerase to the torCAD promoter. In terms of processing, phosphorylated and dephosphorylated by TorS.

The protein localises to the cytoplasm. Its function is as follows. Member of the two-component regulatory system TorS/TorR involved in the anaerobic utilization of trimethylamine-N-oxide (TMAO). Phosphorylated TorR activates the transcription of the torCAD operon by binding to four decameric boxes located in the torCAD promoter. Box1, 2 and 4 contain the DNA sequence 5'-CTGTTCATAT-3' and box3 contains the DNA sequence 5'-CCGTTCATCC-3'. Phosphorylated as well as unphosphorylated TorR negatively regulates its own expression by binding to box1 and 2. The chain is TorCAD operon transcriptional regulatory protein TorR (torR) from Escherichia coli (strain K12).